The sequence spans 162 residues: Selenoprotein F (162 aa).

The signal sequence occupies residues 1–28 (MAAGQGGWLRPALGLRLLLATAFQAVSA). Sec93 is a non-standard amino acid (selenocysteine).

The protein belongs to the selenoprotein M/F family. In terms of assembly, forms a tight complex with UGGT1/UGCGL1. Interacts with UGGT2/UGCGL2. Interacts with RDH11. In terms of tissue distribution, highest levels in prostate, lower levels in brain, lung, thyroid gland, and large intestine.

The protein localises to the endoplasmic reticulum lumen. May be involved in redox reactions associated with the formation of disulfide bonds. May contribute to the quality control of protein folding in the endoplasmic reticulum. May regulate protein folding by enhancing the catalytic activity of UGGT1/UGCGL1 and UGGT2/UGCGL2. This is Selenoprotein F from Rattus norvegicus (Rat).